The sequence spans 182 residues: Large ribosomal subunit protein uL6 (182 aa).

Belongs to the universal ribosomal protein uL6 family. Part of the 50S ribosomal subunit.

Functionally, this protein binds to the 23S rRNA, and is important in its secondary structure. It is located near the subunit interface in the base of the L7/L12 stalk, and near the tRNA binding site of the peptidyltransferase center. The sequence is that of Large ribosomal subunit protein uL6 from Nostoc punctiforme (strain ATCC 29133 / PCC 73102).